The primary structure comprises 316 residues: Pantothenate kinase (316 aa).

Residue 95–102 coordinates ATP; it reads GSVAVGKS.

It belongs to the prokaryotic pantothenate kinase family.

Its subcellular location is the cytoplasm. The enzyme catalyses (R)-pantothenate + ATP = (R)-4'-phosphopantothenate + ADP + H(+). Its pathway is cofactor biosynthesis; coenzyme A biosynthesis; CoA from (R)-pantothenate: step 1/5. In Serratia proteamaculans (strain 568), this protein is Pantothenate kinase.